The following is a 453-amino-acid chain: tRNA hydroxylation protein P (453 aa).

The protein belongs to the peptidase U32 family.

Involved in prephenate-dependent formation of 5-hydroxyuridine (ho5U) modification at position 34 in tRNAs, the first step in 5-carboxymethoxyuridine (cmo5U) biosynthesis. Involved differently in ho5U formation in each tRNA; tRNA(Leu3) and tRNA(Pro3) are major targets of TrhP. This chain is tRNA hydroxylation protein P, found in Escherichia coli (strain K12).